The chain runs to 102 residues: FMRFamide-like neuropeptides 9 (102 aa).

An N-terminal signal peptide occupies residues 1-19 (MNQFYALFLVACIAAMANA). A propeptide spanning residues 20–63 (YEEPDLDALAEFCGKESNRKYCDQIAQLATQHAIGINQEQVRME) is cleaved from the precursor. A Phenylalanine amide modification is found at Phe-72. The propeptide occupies 75-90 (RSGYPLVIDDEEMRMD). A Phenylalanine amide modification is found at Phe-99.

The protein belongs to the FARP (FMRFamide related peptide) family. As to expression, each flp gene is expressed in a distinct set of neurons.

The protein localises to the secreted. Functionally, FMRFamides and FMRFamide-like peptides are neuropeptides. KPSFVRF-amide: Has no effect on somatic body wall muscle, inhibits contraction of vaginal vera muscle, and inhibits the activity of the dissected pharyngeal myogenic muscle system. Acts as a ligand for the npr-22 receptor in vitro. This is FMRFamide-like neuropeptides 9 from Caenorhabditis elegans.